A 218-amino-acid polypeptide reads, in one-letter code: UPF0301 protein RPB_4502 (218 aa).

The tract at residues 1 to 26 (MVTKSKRPKSGDRSGREPGNAGPIEQ) is disordered.

Belongs to the UPF0301 (AlgH) family.

This Rhodopseudomonas palustris (strain HaA2) protein is UPF0301 protein RPB_4502.